A 220-amino-acid polypeptide reads, in one-letter code: Small ribosomal subunit protein uS2 (220 aa).

It belongs to the universal ribosomal protein uS2 family.

This is Small ribosomal subunit protein uS2 from Methanococcus maripaludis (strain C5 / ATCC BAA-1333).